Here is a 341-residue protein sequence, read N- to C-terminus: Glycerol-3-phosphate dehydrogenase [NAD(P)+] (341 aa).

NADPH-binding residues include Ser17, Trp18, Arg37, and Lys112. Residues Lys112 and Gly140 each coordinate sn-glycerol 3-phosphate. Ala144 lines the NADPH pocket. 5 residues coordinate sn-glycerol 3-phosphate: Lys195, Asp248, Ser258, Arg259, and Asn260. Lys195 acts as the Proton acceptor in catalysis. Arg259 is a binding site for NADPH. NADPH is bound by residues Val283 and Glu285.

It belongs to the NAD-dependent glycerol-3-phosphate dehydrogenase family.

It localises to the cytoplasm. The catalysed reaction is sn-glycerol 3-phosphate + NAD(+) = dihydroxyacetone phosphate + NADH + H(+). It carries out the reaction sn-glycerol 3-phosphate + NADP(+) = dihydroxyacetone phosphate + NADPH + H(+). It functions in the pathway membrane lipid metabolism; glycerophospholipid metabolism. Functionally, catalyzes the reduction of the glycolytic intermediate dihydroxyacetone phosphate (DHAP) to sn-glycerol 3-phosphate (G3P), the key precursor for phospholipid synthesis. The protein is Glycerol-3-phosphate dehydrogenase [NAD(P)+] of Mycobacterium avium (strain 104).